Consider the following 338-residue polypeptide: Fructose-bisphosphate aldolase (338 aa).

Residues R50 and K138 each contribute to the substrate site. E179 acts as the Proton acceptor in catalysis. K221 acts as the Schiff-base intermediate with dihydroxyacetone-P in catalysis.

Belongs to the class I fructose-bisphosphate aldolase family.

It carries out the reaction beta-D-fructose 1,6-bisphosphate = D-glyceraldehyde 3-phosphate + dihydroxyacetone phosphate. The protein operates within carbohydrate degradation; glycolysis; D-glyceraldehyde 3-phosphate and glycerone phosphate from D-glucose: step 4/4. The protein is Fructose-bisphosphate aldolase of Encephalitozoon cuniculi (strain GB-M1) (Microsporidian parasite).